Reading from the N-terminus, the 226-residue chain is ATP-dependent dethiobiotin synthetase BioD (226 aa).

14 to 19 (GIGKTF) serves as a coordination point for ATP. Residue T18 participates in Mg(2+) binding. The active site involves K39. Position 43 (S43) interacts with substrate. Residues D56, 117 to 120 (EGVG), 177 to 178 (NT), 206 to 208 (PHI), and N213 contribute to the ATP site. Residues D56 and E117 each coordinate Mg(2+).

This sequence belongs to the dethiobiotin synthetase family. In terms of assembly, homodimer. It depends on Mg(2+) as a cofactor.

The protein resides in the cytoplasm. It carries out the reaction (7R,8S)-7,8-diammoniononanoate + CO2 + ATP = (4R,5S)-dethiobiotin + ADP + phosphate + 3 H(+). The protein operates within cofactor biosynthesis; biotin biosynthesis; biotin from 7,8-diaminononanoate: step 1/2. Catalyzes a mechanistically unusual reaction, the ATP-dependent insertion of CO2 between the N7 and N8 nitrogen atoms of 7,8-diaminopelargonic acid (DAPA, also called 7,8-diammoniononanoate) to form a ureido ring. This is ATP-dependent dethiobiotin synthetase BioD from Xylella fastidiosa (strain 9a5c).